We begin with the raw amino-acid sequence, 183 residues long: Cell division protein SepF (183 aa).

A disordered region spans residues 13–58 (MHDDDDFDDDYEDYDDDFDEDYEDDKPSARKRLFTGSSKKDSVADE). Residues 16–36 (DDDFDDDYEDYDDDFDEDYED) show a composition bias toward acidic residues.

It belongs to the SepF family. As to quaternary structure, homodimer. Interacts with FtsZ.

It is found in the cytoplasm. Cell division protein that is part of the divisome complex and is recruited early to the Z-ring. Probably stimulates Z-ring formation, perhaps through the cross-linking of FtsZ protofilaments. Its function overlaps with FtsA. This chain is Cell division protein SepF, found in Lachnospira eligens (strain ATCC 27750 / DSM 3376 / VPI C15-48 / C15-B4) (Eubacterium eligens).